A 684-amino-acid chain; its full sequence is Glycine--tRNA ligase beta subunit (684 aa).

The protein belongs to the class-II aminoacyl-tRNA synthetase family. Tetramer of two alpha and two beta subunits.

The protein resides in the cytoplasm. The enzyme catalyses tRNA(Gly) + glycine + ATP = glycyl-tRNA(Gly) + AMP + diphosphate. The sequence is that of Glycine--tRNA ligase beta subunit from Pseudomonas syringae pv. tomato (strain ATCC BAA-871 / DC3000).